The chain runs to 192 residues: uncharacterized protein (192 aa).

A Nudix hydrolase domain is found at 29-160; the sequence is QRQAAVLIPV…PLDVYRRGNS (132 aa). Residues 67–89 carry the Nudix box motif; the sequence is GAVDSTDASLIAAALREAQEEVA. 2 residues coordinate Mg(2+): E83 and E87.

The protein belongs to the Nudix hydrolase family. PCD1 subfamily. The cofactor is Mn(2+). Mg(2+) serves as cofactor.

Probably mediates the hydrolysis of some nucleoside diphosphate derivatives. This is an uncharacterized protein from Salmonella newport (strain SL254).